Here is a 157-residue protein sequence, read N- to C-terminus: Small ribosomal subunit protein uS7 (157 aa).

This sequence belongs to the universal ribosomal protein uS7 family. In terms of assembly, part of the 30S ribosomal subunit. Contacts proteins S9 and S11.

Its function is as follows. One of the primary rRNA binding proteins, it binds directly to 16S rRNA where it nucleates assembly of the head domain of the 30S subunit. Is located at the subunit interface close to the decoding center, probably blocks exit of the E-site tRNA. The polypeptide is Small ribosomal subunit protein uS7 (Leptospira interrogans serogroup Icterohaemorrhagiae serovar copenhageni (strain Fiocruz L1-130)).